The sequence spans 852 residues: Taste receptor type 1 member 3 (852 aa).

An N-terminal signal peptide occupies residues 1-20; it reads MLGPAVLGLSLWALLHPGTG. Topologically, residues 21-570 are extracellular; the sequence is APLCLSQQLR…FLAWGEPAVL (550 aa). 8 N-linked (GlcNAc...) asparagine glycosylation sites follow: Asn85, Asn130, Asn264, Asn285, Asn380, Asn411, Asn432, and Asn475. The tract at residues 536-545 is required for brazzein responsiveness; it reads IACTFCGQDE. Residues 571 to 591 form a helical membrane-spanning segment; the sequence is LLLLLLSLALGLVLAALGLFV. Residues 592–603 are Cytoplasmic-facing; it reads HHRDSPLVQASG. Residues 604–624 traverse the membrane as a helical segment; sequence GPLACFGLVCLGLVCLSVLLF. At 625 to 639 the chain is on the extracellular side; that stretch reads PGQPSPARCLAQQPL. A helical transmembrane segment spans residues 640 to 660; the sequence is SHLPLTGCLSTLFLQAAEIFV. The Cytoplasmic segment spans residues 661-682; the sequence is ESELPLSWADRLSGCLRGPWAW. The helical transmembrane segment at 683–703 threads the bilayer; that stretch reads LVVLLAMLVEVALCTWYLVAF. Topologically, residues 704 to 729 are extracellular; it reads PPEVVTDWHMLPTEALVHCRTRSWVS. The chain crosses the membrane as a helical span at residues 730–750; that stretch reads FGLAHATNATLAFLCFLGTFL. Topologically, residues 751-762 are cytoplasmic; it reads VRSQPGCYNRAR. A helical membrane pass occupies residues 763–783; it reads GLTFAMLAYFITWVSFVPLLA. At 784-789 the chain is on the extracellular side; the sequence is NVQVVL. Residues 790 to 810 form a helical membrane-spanning segment; the sequence is RPAVQMGALLLCVLGILAAFH. Residues 811–852 are Cytoplasmic-facing; it reads LPRCYLLMRQPGLNTPEFFLGGGPGDAQGQNDGNTGNQGKHE.

This sequence belongs to the G-protein coupled receptor 3 family. TAS1R subfamily. In terms of assembly, forms homodimers or heterodimers with TAS1R1 and TAS1R2.

The protein resides in the cell membrane. In terms of biological role, putative taste receptor. TAS1R1/TAS1R3 responds to the umami taste stimulus (the taste of monosodium glutamate). TAS1R2/TAS1R3 recognizes diverse natural and synthetic sweeteners. TAS1R3 is essential for the recognition and response to the disaccharide trehalose. Sequence differences within and between species can significantly influence the selectivity and specificity of taste responses. The chain is Taste receptor type 1 member 3 (TAS1R3) from Homo sapiens (Human).